A 945-amino-acid chain; its full sequence is Bifunctional glutamine synthetase adenylyltransferase/adenylyl-removing enzyme (945 aa).

The interval 1–441 is adenylyl removase; sequence MLPLSAALQT…VFNDLIGDDS (441 aa). An adenylyl transferase region spans residues 450-945; sequence YQHYHSLWQD…VRASWAKWLG (496 aa).

This sequence belongs to the GlnE family. Requires Mg(2+) as cofactor.

The enzyme catalyses [glutamine synthetase]-O(4)-(5'-adenylyl)-L-tyrosine + phosphate = [glutamine synthetase]-L-tyrosine + ADP. It carries out the reaction [glutamine synthetase]-L-tyrosine + ATP = [glutamine synthetase]-O(4)-(5'-adenylyl)-L-tyrosine + diphosphate. Involved in the regulation of glutamine synthetase GlnA, a key enzyme in the process to assimilate ammonia. When cellular nitrogen levels are high, the C-terminal adenylyl transferase (AT) inactivates GlnA by covalent transfer of an adenylyl group from ATP to specific tyrosine residue of GlnA, thus reducing its activity. Conversely, when nitrogen levels are low, the N-terminal adenylyl removase (AR) activates GlnA by removing the adenylyl group by phosphorolysis, increasing its activity. The regulatory region of GlnE binds the signal transduction protein PII (GlnB) which indicates the nitrogen status of the cell. The protein is Bifunctional glutamine synthetase adenylyltransferase/adenylyl-removing enzyme of Serratia proteamaculans (strain 568).